Reading from the N-terminus, the 445-residue chain is UDP-glucuronic acid decarboxylase 2 (445 aa).

Alanine 2 carries the N-acetylalanine modification. At 2 to 43 the chain is on the cytoplasmic side; that stretch reads ASELINRRHETDQPTADAYYPKPIKPWFTVTRPMRYMLREQR. Residues 44-64 form a helical; Signal-anchor for type II membrane protein membrane-spanning segment; it reads LIFVLVGIAIATLVFTIFPRS. The Lumenal segment spans residues 65–445; sequence TQSTPYSDPF…AATTTKTTSA (381 aa). 149–174 contributes to the NAD(+) binding site; that stretch reads DNFFTGRKENVMHHFSNPNFEMIRHD. Arginine 258 contacts substrate. Tyrosine 261 functions as the Proton acceptor in the catalytic mechanism. 261–265 provides a ligand contact to NAD(+); the sequence is YDEGK. Asparagine 290 lines the substrate pocket. Arginine 302 lines the NAD(+) pocket. Residues 303–307, 320–327, and 387–391 contribute to the substrate site; these read VVSNF, YGDGKQTR, and DPHKR.

It belongs to the NAD(P)-dependent epimerase/dehydratase family. UDP-glucuronic acid decarboxylase subfamily. As to quaternary structure, homodimer. NAD(+) is required as a cofactor. In terms of tissue distribution, ubiquitous.

Its subcellular location is the golgi apparatus. The protein resides in the golgi stack membrane. The enzyme catalyses UDP-alpha-D-glucuronate + H(+) = UDP-alpha-D-xylose + CO2. The protein operates within nucleotide-sugar biosynthesis; UDP-alpha-D-xylose biosynthesis; UDP-alpha-D-xylose from UDP-alpha-D-glucuronate: step 1/1. Catalyzes the NAD-dependent decarboxylation of UDP-glucuronic acid to UDP-xylose. Necessary for the biosynthesis of the core tetrasaccharide in glycosaminoglycan biosynthesis. The protein is UDP-glucuronic acid decarboxylase 2 (UXS2) of Arabidopsis thaliana (Mouse-ear cress).